The sequence spans 199 residues: Pyridoxal 5'-phosphate synthase subunit PdxT (199 aa).

Residue 49 to 51 coordinates L-glutamine; that stretch reads GES. Residue Cys81 is the Nucleophile of the active site. Residues Arg110 and 139–140 each bind L-glutamine; that span reads IR. Residues His175 and Glu177 each act as charge relay system in the active site.

This sequence belongs to the glutaminase PdxT/SNO family. In the presence of PdxS, forms a dodecamer of heterodimers. Only shows activity in the heterodimer.

It carries out the reaction aldehydo-D-ribose 5-phosphate + D-glyceraldehyde 3-phosphate + L-glutamine = pyridoxal 5'-phosphate + L-glutamate + phosphate + 3 H2O + H(+). The enzyme catalyses L-glutamine + H2O = L-glutamate + NH4(+). It participates in cofactor biosynthesis; pyridoxal 5'-phosphate biosynthesis. Its function is as follows. Catalyzes the hydrolysis of glutamine to glutamate and ammonia as part of the biosynthesis of pyridoxal 5'-phosphate. The resulting ammonia molecule is channeled to the active site of PdxS. The chain is Pyridoxal 5'-phosphate synthase subunit PdxT from Frankia alni (strain DSM 45986 / CECT 9034 / ACN14a).